A 97-amino-acid chain; its full sequence is Aspartyl/glutamyl-tRNA(Asn/Gln) amidotransferase subunit C (97 aa).

Belongs to the GatC family. In terms of assembly, heterotrimer of A, B and C subunits.

The enzyme catalyses L-glutamyl-tRNA(Gln) + L-glutamine + ATP + H2O = L-glutaminyl-tRNA(Gln) + L-glutamate + ADP + phosphate + H(+). It carries out the reaction L-aspartyl-tRNA(Asn) + L-glutamine + ATP + H2O = L-asparaginyl-tRNA(Asn) + L-glutamate + ADP + phosphate + 2 H(+). Functionally, allows the formation of correctly charged Asn-tRNA(Asn) or Gln-tRNA(Gln) through the transamidation of misacylated Asp-tRNA(Asn) or Glu-tRNA(Gln) in organisms which lack either or both of asparaginyl-tRNA or glutaminyl-tRNA synthetases. The reaction takes place in the presence of glutamine and ATP through an activated phospho-Asp-tRNA(Asn) or phospho-Glu-tRNA(Gln). The protein is Aspartyl/glutamyl-tRNA(Asn/Gln) amidotransferase subunit C of Listeria monocytogenes serotype 4b (strain CLIP80459).